The chain runs to 609 residues: DNA mismatch repair protein MutL (609 aa).

A disordered region spans residues 364-386 (SVNSKPTDYRPAMSPSFKSTPNT).

The protein belongs to the DNA mismatch repair MutL/HexB family.

In terms of biological role, this protein is involved in the repair of mismatches in DNA. It is required for dam-dependent methyl-directed DNA mismatch repair. May act as a 'molecular matchmaker', a protein that promotes the formation of a stable complex between two or more DNA-binding proteins in an ATP-dependent manner without itself being part of a final effector complex. This is DNA mismatch repair protein MutL from Rickettsia akari (strain Hartford).